The following is a 127-amino-acid chain: Small ribosomal subunit protein uS11 (127 aa).

The protein belongs to the universal ribosomal protein uS11 family. In terms of assembly, part of the 30S ribosomal subunit. Interacts with proteins S7 and S18. Binds to IF-3.

Functionally, located on the platform of the 30S subunit, it bridges several disparate RNA helices of the 16S rRNA. Forms part of the Shine-Dalgarno cleft in the 70S ribosome. The polypeptide is Small ribosomal subunit protein uS11 (Streptococcus thermophilus (strain CNRZ 1066)).